The chain runs to 273 residues: Shikimate dehydrogenase (NADP(+)) (273 aa).

Residues 15–17 (SKS) and T62 each bind shikimate. K66 (proton acceptor) is an active-site residue. Position 78 (E78) interacts with NADP(+). Residues N87 and D103 each contribute to the shikimate site. NADP(+) is bound by residues 127–131 (GAGGA), 150–155 (NRTQEK), and M213. Shikimate is bound at residue Y215. G237 contributes to the NADP(+) binding site.

The protein belongs to the shikimate dehydrogenase family. As to quaternary structure, homodimer.

It catalyses the reaction shikimate + NADP(+) = 3-dehydroshikimate + NADPH + H(+). It functions in the pathway metabolic intermediate biosynthesis; chorismate biosynthesis; chorismate from D-erythrose 4-phosphate and phosphoenolpyruvate: step 4/7. Its function is as follows. Involved in the biosynthesis of the chorismate, which leads to the biosynthesis of aromatic amino acids. Catalyzes the reversible NADPH linked reduction of 3-dehydroshikimate (DHSA) to yield shikimate (SA). The polypeptide is Shikimate dehydrogenase (NADP(+)) (Shewanella woodyi (strain ATCC 51908 / MS32)).